Consider the following 141-residue polypeptide: Large ribosomal subunit protein uL11 (141 aa).

It belongs to the universal ribosomal protein uL11 family. In terms of assembly, part of the ribosomal stalk of the 50S ribosomal subunit. Interacts with L10 and the large rRNA to form the base of the stalk. L10 forms an elongated spine to which L12 dimers bind in a sequential fashion forming a multimeric L10(L12)X complex. Post-translationally, one or more lysine residues are methylated.

Forms part of the ribosomal stalk which helps the ribosome interact with GTP-bound translation factors. This chain is Large ribosomal subunit protein uL11, found in Pseudothermotoga lettingae (strain ATCC BAA-301 / DSM 14385 / NBRC 107922 / TMO) (Thermotoga lettingae).